We begin with the raw amino-acid sequence, 289 residues long: ATP synthase subunit a (289 aa).

The next 6 membrane-spanning stretches (helical) occupy residues 43 to 63 (AFHV…VLIF), 101 to 121 (SAVI…MNAV), 160 to 180 (LSVF…GGFI), 193 to 213 (LFVQ…TLIA), 232 to 252 (VFIL…GLGV), and 259 to 279 (AVFH…LTIV).

Belongs to the ATPase A chain family. As to quaternary structure, F-type ATPases have 2 components, CF(1) - the catalytic core - and CF(0) - the membrane proton channel. CF(1) has five subunits: alpha(3), beta(3), gamma(1), delta(1), epsilon(1). CF(0) has three main subunits: a(1), b(2) and c(9-12). The alpha and beta chains form an alternating ring which encloses part of the gamma chain. CF(1) is attached to CF(0) by a central stalk formed by the gamma and epsilon chains, while a peripheral stalk is formed by the delta and b chains.

The protein localises to the cell inner membrane. In terms of biological role, key component of the proton channel; it plays a direct role in the translocation of protons across the membrane. This Pseudomonas syringae pv. syringae (strain B728a) protein is ATP synthase subunit a.